A 348-amino-acid polypeptide reads, in one-letter code: Selenide, water dikinase (348 aa).

Cysteine 17 is an active-site residue. Residues lysine 20 and 47 to 49 contribute to the ATP site; that span reads RAD. Aspartate 50 is a binding site for Mg(2+). Residues aspartate 67, aspartate 90, and 138–140 each bind ATP; that span reads GHT. Residue aspartate 90 participates in Mg(2+) binding. Aspartate 226 is a binding site for Mg(2+).

Belongs to the selenophosphate synthase 1 family. Class I subfamily. As to quaternary structure, homodimer. Requires Mg(2+) as cofactor.

The catalysed reaction is hydrogenselenide + ATP + H2O = selenophosphate + AMP + phosphate + 2 H(+). Synthesizes selenophosphate from selenide and ATP. The sequence is that of Selenide, water dikinase from Pelobacter propionicus (strain DSM 2379 / NBRC 103807 / OttBd1).